The chain runs to 214 residues: Protein-L-isoaspartate O-methyltransferase (214 aa).

Ser63 is a catalytic residue.

The protein belongs to the methyltransferase superfamily. L-isoaspartyl/D-aspartyl protein methyltransferase family.

The protein resides in the cytoplasm. The catalysed reaction is [protein]-L-isoaspartate + S-adenosyl-L-methionine = [protein]-L-isoaspartate alpha-methyl ester + S-adenosyl-L-homocysteine. Catalyzes the methyl esterification of L-isoaspartyl residues in peptides and proteins that result from spontaneous decomposition of normal L-aspartyl and L-asparaginyl residues. It plays a role in the repair and/or degradation of damaged proteins. In Maridesulfovibrio salexigens (strain ATCC 14822 / DSM 2638 / NCIMB 8403 / VKM B-1763) (Desulfovibrio salexigens), this protein is Protein-L-isoaspartate O-methyltransferase.